The primary structure comprises 403 residues: Phosphopentomutase (403 aa).

Mn(2+) contacts are provided by Asp13, Asp298, His303, Asp339, His340, and His351.

The protein belongs to the phosphopentomutase family. Mn(2+) is required as a cofactor.

The protein resides in the cytoplasm. It carries out the reaction 2-deoxy-alpha-D-ribose 1-phosphate = 2-deoxy-D-ribose 5-phosphate. The enzyme catalyses alpha-D-ribose 1-phosphate = D-ribose 5-phosphate. It functions in the pathway carbohydrate degradation; 2-deoxy-D-ribose 1-phosphate degradation; D-glyceraldehyde 3-phosphate and acetaldehyde from 2-deoxy-alpha-D-ribose 1-phosphate: step 1/2. In terms of biological role, isomerase that catalyzes the conversion of deoxy-ribose 1-phosphate (dRib-1-P) and ribose 1-phosphate (Rib-1-P) to deoxy-ribose 5-phosphate (dRib-5-P) and ribose 5-phosphate (Rib-5-P), respectively. This Streptococcus pyogenes serotype M12 (strain MGAS2096) protein is Phosphopentomutase.